The sequence spans 980 residues: Glutamate receptor ionotropic, kainate 5 (980 aa).

The first 14 residues, 1–14 (MPAELLLLLIVAFA), serve as a signal peptide directing secretion. The Extracellular segment spans residues 15–544 (SPSCQVLSSL…YFSFLDPFSP (530 aa)). Intrachain disulfides connect cysteine 36/cysteine 292, cysteine 83/cysteine 334, and cysteine 165/cysteine 170. 10 N-linked (GlcNAc...) asparagine glycosylation sites follow: asparagine 219, asparagine 271, asparagine 285, asparagine 322, asparagine 372, asparagine 394, asparagine 400, asparagine 407, asparagine 414, and asparagine 478. The helical transmembrane segment at 545–565 (AVWLFMLLAYLAVSCVLFLAA) threads the bilayer. Residues 566 to 622 (RLSPYEWYNPHPCLRARPHILENQYTLGNSLWFPVGGFMQQGSEIMPRALSTRCVSG) lie on the Cytoplasmic side of the membrane. A helical membrane pass occupies residues 623 to 643 (VWWAFTLIIISSYTANLAAFL). Residues 644–803 (TVQRMEVPVE…HRAKGLGMEN (160 aa)) lie on the Extracellular side of the membrane. Asparagine 735 carries N-linked (GlcNAc...) asparagine glycosylation. A helical membrane pass occupies residues 804–824 (IGGIFIVLICGLIIAVFVAVM). Residues 825–980 (EFIWSTRRSA…AGPRELAEHE (156 aa)) lie on the Cytoplasmic side of the membrane. Disordered regions lie at residues 891–927 (YSAG…PTPC) and 944–980 (ASGA…AEHE). Over residues 894-903 (GAGGDAGSAH) the composition is skewed to gly residues.

Belongs to the glutamate-gated ion channel (TC 1.A.10.1) family. GRIK5 subfamily. Homotetramer. Heterotetramer with GRIK2. Can form functional heteromeric receptors with GRIK1 and GRIK2. Can form functional heteromeric receptors with GRIK3.

Its subcellular location is the cell membrane. It is found in the postsynaptic cell membrane. The protein resides in the presynaptic cell membrane. Its function is as follows. Ionotropic glutamate receptor that functions as a cation-permeable ligand-gated ion channel, gated by L-glutamate and the glutamatergic agonist kainic acid. Cannot form functional channels on its own and produces channel activity only in heteromeric assembly with GRIK1 and GRIK2 subunits. Can form functional heteromeric receptors with GRIK3. The chain is Glutamate receptor ionotropic, kainate 5 (GRIK5) from Homo sapiens (Human).